The following is a 487-amino-acid chain: Serine/threonine-protein kinase 4 (487 aa).

The residue at position 1 (Met-1) is an N-acetylmethionine. A Phosphothreonine modification is found at Thr-3. The 252-residue stretch at 30–281 (FDVLEKLGEG…ATQLLQHPFV (252 aa)) folds into the Protein kinase domain. ATP contacts are provided by residues 36–44 (LGEGSYGSV) and Lys-59. Residue Asp-149 is the Proton acceptor of the active site. Thr-183 carries the post-translational modification Phosphothreonine; by autocatalysis. Residue Ser-265 is modified to Phosphoserine. Positions 290–310 (LRDLINEAMDVKLKRQESQQR) form a coiled coil. Over residues 303-312 (KRQESQQREV) the composition is skewed to basic and acidic residues. The disordered stretch occupies residues 303-332 (KRQESQQREVDQDDEENSEEDEMDSGTMVR). Acidic residues predominate over residues 313 to 326 (DQDDEENSEEDEMD). Ser-320 carries the post-translational modification Phosphoserine. Phosphothreonine occurs at positions 340 and 367. Thr-387 carries the post-translational modification Phosphothreonine; by PKB/AKT1. Phosphoserine is present on residues Ser-410 and Ser-414. Tyr-433 is subject to Phosphotyrosine. The region spanning 433-480 (YEFLKSWTVEDLQKRLLALDPMMEQEIEEIRQKYQSKRQPILDAIEAK) is the SARAH domain.

This sequence belongs to the protein kinase superfamily. STE Ser/Thr protein kinase family. STE20 subfamily. In terms of assembly, homodimer; mediated via the coiled-coil region. Interacts with NORE1, which inhibits autoactivation. Interacts with and stabilizes SAV1. Interacts with RASSF1. Interacts with FOXO3. Interacts with RASSF2 (via SARAH domain). Interacts with AR, PKB/AKT1, TNNI3 and SIRT1. Interacts with DLG5 (via PDZ domain 3). Interacts with MARK3 and SCRIB in the presence of DLG5. The cofactor is Mg(2+). Post-translationally, autophosphorylated on serine and threonine residues. Phosphorylation at Thr-387 by PKB/AKT1, leads to inhibition of its: kinase activity, nuclear translocation and autophosphorylation at Thr-183. It also diminishes its cleavage by caspases and its ability to phosphorylate FOXO3. In terms of processing, proteolytically cleaved by caspase-3 during apoptosis at Asp-326 and Asp-349 resulting in a 37 kDa or a 39 kDa subunit respectively. The 39 kDa subunit is further cleaved into the 37 kDa form. Proteolytic cleavage results in kinase activation and nuclear translocation of the truncated form (MST1/N). It is less likely that cleavage at Asp-349 is a prerequisite for activation as this site is not conserved in the murine ortholog.

It localises to the cytoplasm. Its subcellular location is the nucleus. The enzyme catalyses L-seryl-[protein] + ATP = O-phospho-L-seryl-[protein] + ADP + H(+). It carries out the reaction L-threonyl-[protein] + ATP = O-phospho-L-threonyl-[protein] + ADP + H(+). With respect to regulation, inhibited by the C-terminal non-catalytic region. Activated by caspase-cleavage. Full activation also requires homodimerization and autophosphorylation of Thr-183. Activated by RASSF1 which acts by preventing its dephosphorylation. Stress-activated, pro-apoptotic kinase which, following caspase-cleavage, enters the nucleus and induces chromatin condensation followed by internucleosomal DNA fragmentation. Key component of the Hippo signaling pathway which plays a pivotal role in organ size control and tumor suppression by restricting proliferation and promoting apoptosis. The core of this pathway is composed of a kinase cascade wherein STK3/MST2 and STK4/MST1, in complex with its regulatory protein SAV1, phosphorylates and activates LATS1/2 in complex with its regulatory protein MOB1, which in turn phosphorylates and inactivates YAP1 oncoprotein and WWTR1/TAZ. Phosphorylation of YAP1 by LATS2 inhibits its translocation into the nucleus to regulate cellular genes important for cell proliferation, cell death, and cell migration. STK3/MST2 and STK4/MST1 are required to repress proliferation of mature hepatocytes, to prevent activation of facultative adult liver stem cells (oval cells), and to inhibit tumor formation. Phosphorylates 'Ser-14' of histone H2B (H2BS14ph) during apoptosis. Phosphorylates FOXO3 upon oxidative stress, which results in its nuclear translocation and cell death initiation. Phosphorylates MOBKL1A, MOBKL1B and RASSF2. Phosphorylates TNNI3 (cardiac Tn-I) and alters its binding affinity to TNNC1 (cardiac Tn-C) and TNNT2 (cardiac Tn-T). Phosphorylates FOXO1 on 'Ser-212' and regulates its activation and stimulates transcription of PMAIP1 in a FOXO1-dependent manner. Phosphorylates SIRT1 and inhibits SIRT1-mediated p53/TP53 deacetylation, thereby promoting p53/TP53 dependent transcription and apoptosis upon DNA damage. Acts as an inhibitor of PKB/AKT1. Phosphorylates AR on 'Ser-650' and suppresses its activity by intersecting with PKB/AKT1 signaling and antagonizing formation of AR-chromatin complexes. This chain is Serine/threonine-protein kinase 4 (STK4), found in Colobus guereza (Mantled guereza).